The chain runs to 294 residues: Nucleophosmin (294 aa).

At methionine 1 the chain carries N-acetylmethionine. The segment at 1–117 (MEDSMDMDMS…PVHISGQHLV (117 aa)) is necessary for interaction with APEX1. The tract at residues 1–187 (MEDSMDMDMS…DDDDDFDEEV (187 aa)) is required for interaction with SENP3. Serine 4 bears the Phosphoserine; by PLK1 and PLK2 mark. The residue at position 10 (serine 10) is a Phosphoserine. Residue lysine 32 is modified to N6-acetyllysine; alternate. A Glycyl lysine isopeptide (Lys-Gly) (interchain with G-Cter in SUMO1); alternate cross-link involves residue lysine 32. Residue lysine 32 forms a Glycyl lysine isopeptide (Lys-Gly) (interchain with G-Cter in SUMO2); alternate linkage. Position 43 is a phosphoserine (serine 43). Tyrosine 67 is subject to Phosphotyrosine. Serine 70 is modified (phosphoserine). Phosphothreonine occurs at positions 75 and 95. Over residues 121 to 132 (EDAESEEEEEEE) the composition is skewed to acidic residues. The interval 121 to 249 (EDAESEEEEE…GPSSVEDIKA (129 aa)) is disordered. Serine 125 is subject to Phosphoserine; by CDK2. Serine 137 and serine 139 each carry phosphoserine. Lysine 141 is covalently cross-linked (Glycyl lysine isopeptide (Lys-Gly) (interchain with G-Cter in SUMO2)). Lysine 150 bears the N6-acetyllysine; alternate mark. Lysine 150 is covalently cross-linked (Glycyl lysine isopeptide (Lys-Gly) (interchain with G-Cter in SUMO2); alternate). Positions 152 to 157 (PQKKVK) match the Nuclear localization signal motif. Lysine 154 is modified (N6-acetyllysine). Over residues 161–188 (DEDEDDDDDDDDDDDEDDDDDDFDEEVE) the composition is skewed to acidic residues. An interaction with NOP2 region spans residues 188-216 (EEKAPVKKSVRDTPAKNAQKSNQNGKDSK). Residues 189 to 201 (EKAPVKKSVRDTP) are compositionally biased toward basic and acidic residues. The short motif at 192–198 (PVKKSVR) is the Nuclear localization signal element. Phosphothreonine; by CDK1 and CDK2 is present on threonine 200. A compositionally biased stretch (polar residues) spans 203–222 (KNAQKSNQNGKDSKPSTPRS). Serine 208 is subject to ADP-ribosylserine. At lysine 213 the chain carries N6-acetyllysine. A Glycyl lysine isopeptide (Lys-Gly) (interchain with G-Cter in SUMO2) cross-link involves residue lysine 216. The residue at position 219 (threonine 219) is a Phosphothreonine; by CDK1. Positions 223-235 (KGQESFKKQEKTP) are enriched in basic and acidic residues. At serine 227 the chain carries Phosphoserine. Lysine 229 is modified (N6-acetyllysine). Lysine 230 carries the post-translational modification N6-acetyllysine; alternate. Lysine 230 is covalently cross-linked (Glycyl lysine isopeptide (Lys-Gly) (interchain with G-Cter in SUMO); alternate). Residues threonine 234 and threonine 237 each carry the phosphothreonine modification. Phosphoserine occurs at positions 242 and 243. The interval 243–294 (SVEDIKAKMQASIEKGGSLPKVEAKFINYVKNCFRMTDQEAIQDLWQWRKSL) is required for nucleolar localization. Lysine 248 is covalently cross-linked (Glycyl lysine isopeptide (Lys-Gly) (interchain with G-Cter in SUMO1); alternate). Residues lysine 248 and lysine 250 each participate in a glycyl lysine isopeptide (Lys-Gly) (interchain with G-Cter in SUMO2); alternate cross-link. N6-acetyllysine; alternate is present on lysine 250. At serine 254 the chain carries Phosphoserine. Lysine 257 is modified (N6-acetyllysine; alternate). Lysine 257 is covalently cross-linked (Glycyl lysine isopeptide (Lys-Gly) (interchain with G-Cter in SUMO1); alternate). Residue lysine 257 forms a Glycyl lysine isopeptide (Lys-Gly) (interchain with G-Cter in SUMO2); alternate linkage. The residue at position 260 (serine 260) is a Phosphoserine. Residues lysine 263, lysine 267, and lysine 273 each participate in a glycyl lysine isopeptide (Lys-Gly) (interchain with G-Cter in SUMO2); alternate cross-link. A Glycyl lysine isopeptide (Lys-Gly) (interchain with G-Cter in SUMO); alternate cross-link involves residue lysine 263. N6-acetyllysine; alternate is present on residues lysine 267 and lysine 273. A Glycyl lysine isopeptide (Lys-Gly) (interchain with G-Cter in SUMO1); alternate cross-link involves residue lysine 267. The residue at position 267 (lysine 267) is an N6-succinyllysine; alternate. Threonine 279 bears the Phosphothreonine mark. Residue lysine 292 is modified to N6-acetyllysine.

Belongs to the nucleoplasmin family. Decamer formed by two pentameric rings associated in a head-to-head fashion. Disulfide-linked dimers under certain conditions. The SWAP complex consists of NPM1, NCL, PARP1 and SWAP70. Interacts with NSUN2 and SENP3. Interacts with the methylated form of RPS10. Interacts (via N-terminal domain) with APEX1; the interaction is RNA-dependent and decreases in hydrogen peroxide-damaged cells. Interacts with isoform 1 of NEK2. Interacts with ROCK2 and BRCA2. Interacts with RPGR. Interacts with CENPW. Interacts with EIF2AK2/PKR. Interacts with CEBPA (isoform 4). Interacts with DDX31; this interaction prevents interaction between NPM1 and HDM2. Interacts with MYC; competitive with NOP53. Interacts with NOP53; the interaction is direct and competitive with MYC. Interacts with LRRC34. Interacts with RRP1B. Interacts with NPM3. Interacts with ALKBH2. Interacts with TTF1 (via C-terminal region). Interacts with NOP2. Interacts with ARID3C (via REKLES DOMAIN); the interaction mediates ARID3C nuclear shuttling. Acetylated at C-terminal lysine residues, thereby increasing affinity to histones. Post-translationally, ADP-ribosylated. In terms of processing, phosphorylated at Ser-4 by PLK1 and PLK2. Phosphorylation at Ser-4 by PLK2 in S phase is required for centriole duplication and is sufficient to trigger centriole replication. Phosphorylation at Ser-4 by PLK1 takes place during mitosis. Phosphorylated by CDK2 at Ser-125 and Thr-200. Phosphorylation at Thr-200 may trigger initiation of centrosome duplication. Phosphorylated by CDK1 at Thr-200, Thr-219, Thr-234 and Thr-237 during cell mitosis. When these four sites are phosphorated, RNA-binding activity seem to be abolished. May be phosphorylated at Ser-70 by NEK2. The Thr-200 phosphorylated form has higher affinity for ROCK2. Sumoylated by ARF. Post-translationally, may be ubiquitinated. Ubiquitination leads to proteasomal degradation. Deubiquitinated by USP36.

It is found in the nucleus. The protein resides in the nucleolus. Its subcellular location is the nucleoplasm. It localises to the cytoplasm. The protein localises to the cytoskeleton. It is found in the microtubule organizing center. The protein resides in the centrosome. Functionally, involved in diverse cellular processes such as ribosome biogenesis, centrosome duplication, protein chaperoning, histone assembly, cell proliferation, and regulation of tumor suppressors p53/TP53 and ARF. Binds ribosome presumably to drive ribosome nuclear export. Associated with nucleolar ribonucleoprotein structures and bind single-stranded nucleic acids. Acts as a chaperonin for the core histones H3, H2B and H4. Stimulates APEX1 endonuclease activity on apurinic/apyrimidinic (AP) double-stranded DNA but inhibits APEX1 endonuclease activity on AP single-stranded RNA. May exert a control of APEX1 endonuclease activity within nucleoli devoted to repair AP on rDNA and the removal of oxidized rRNA molecules. In concert with BRCA2, regulates centrosome duplication. Regulates centriole duplication: phosphorylation by PLK2 is able to trigger centriole replication. Negatively regulates the activation of EIF2AK2/PKR and suppresses apoptosis through inhibition of EIF2AK2/PKR autophosphorylation. Antagonizes the inhibitory effect of ATF5 on cell proliferation and relieves ATF5-induced G2/M blockade. In complex with MYC enhances the transcription of MYC target genes. May act as chaperonin or cotransporter in the nucleolar localization of transcription termination factor TTF1. This is Nucleophosmin (NPM1) from Bos taurus (Bovine).